A 778-amino-acid polypeptide reads, in one-letter code: Endonuclease MutS2 (778 aa).

Residue glycine 328–threonine 335 coordinates ATP. In terms of domain architecture, Smr spans leucine 703–glycine 778.

It belongs to the DNA mismatch repair MutS family. MutS2 subfamily. In terms of assembly, homodimer. Binds to stalled ribosomes, contacting rRNA.

Endonuclease that is involved in the suppression of homologous recombination and thus may have a key role in the control of bacterial genetic diversity. Its function is as follows. Acts as a ribosome collision sensor, splitting the ribosome into its 2 subunits. Detects stalled/collided 70S ribosomes which it binds and splits by an ATP-hydrolysis driven conformational change. Acts upstream of the ribosome quality control system (RQC), a ribosome-associated complex that mediates the extraction of incompletely synthesized nascent chains from stalled ribosomes and their subsequent degradation. Probably generates substrates for RQC. The protein is Endonuclease MutS2 of Streptococcus equi subsp. equi (strain 4047).